Reading from the N-terminus, the 391-residue chain is Erythronate-4-phosphate dehydrogenase (391 aa).

Substrate-binding residues include Ser-45 and Thr-67. The NAD(+) site is built by Asp-147 and Thr-176. Arg-209 is a catalytic residue. An NAD(+)-binding site is contributed by Asp-238. The active site involves Glu-243. The active-site Proton donor is His-260. Position 263 (Gly-263) interacts with NAD(+). Tyr-264 is a binding site for substrate.

This sequence belongs to the D-isomer specific 2-hydroxyacid dehydrogenase family. PdxB subfamily. Homodimer.

Its subcellular location is the cytoplasm. It carries out the reaction 4-phospho-D-erythronate + NAD(+) = (R)-3-hydroxy-2-oxo-4-phosphooxybutanoate + NADH + H(+). It participates in cofactor biosynthesis; pyridoxine 5'-phosphate biosynthesis; pyridoxine 5'-phosphate from D-erythrose 4-phosphate: step 2/5. Catalyzes the oxidation of erythronate-4-phosphate to 3-hydroxy-2-oxo-4-phosphonooxybutanoate. This is Erythronate-4-phosphate dehydrogenase from Photobacterium profundum (strain SS9).